The sequence spans 126 residues: Small nuclear ribonucleoprotein Sm D3 (126 aa).

The residue at position 2 (Ser-2) is an N-acetylserine. The Sm domain maps to 5–77 (VPIKVLHEAE…IRFLILPDML (73 aa)). 5 repeat units span residues 110–111 (RG), 112–113 (RG), 114–115 (RG), 116–117 (MG), and 118–119 (RG). Positions 110–119 (RGRGRGMGRG) are 5 X 2 AA tandem repeats of [RM]-G; required for interaction with SMN1.

The protein belongs to the snRNP core protein family. In terms of assembly, core component of the spliceosomal U1, U2, U4 and U5 small nuclear ribonucleoproteins (snRNPs), the building blocks of the spliceosome. Most spliceosomal snRNPs contain a common set of Sm proteins, SNRPB, SNRPD1, SNRPD2, SNRPD3, SNRPE, SNRPF and SNRPG that assemble in a heptameric protein ring on the Sm site of the small nuclear RNA to form the core snRNP. Component of the U1 snRNP. The U1 snRNP is composed of the U1 snRNA and the 7 core Sm proteins SNRPB, SNRPD1, SNRPD2, SNRPD3, SNRPE, SNRPF and SNRPG, and at least three U1 snRNP-specific proteins SNRNP70/U1-70K, SNRPA/U1-A and SNRPC/U1-C. Component of the U4/U6-U5 tri-snRNP complex composed of the U4, U6 and U5 snRNAs and at least PRPF3, PRPF4, PRPF6, PRPF8, PRPF31, SNRNP200, TXNL4A, SNRNP40, SNRPB, SNRPD1, SNRPD2, SNRPD3, SNRPE, SNRPF, SNRPG, DDX23, CD2BP2, PPIH, SNU13, EFTUD2, SART1 and USP39, plus LSM2, LSM3, LSM4, LSM5, LSM6, LSM7 and LSM8. Component of the U7 snRNP complex, or U7 Sm protein core complex, that is composed of the U7 snRNA and at least LSM10, LSM11, SNRPB, SNRPD3, SNRPE, SNRPF and SNRPG; the complex does not contain SNRPD1 and SNRPD2. Component of the minor spliceosome, which splices U12-type introns. Part of the SMN-Sm complex that contains SMN1, GEMIN2/SIP1, DDX20/GEMIN3, GEMIN4, GEMIN5, GEMIN6, GEMIN7, GEMIN8, STRAP/UNRIP and the Sm proteins SNRPB, SNRPD1, SNRPD2, SNRPD3, SNRPE, SNRPF and SNRPG; catalyzes core snRNPs assembly. Forms a 6S pICln-Sm complex composed of CLNS1A/pICln, SNRPD1, SNRPD2, SNRPE, SNRPF and SNRPG; ring-like structure where CLNS1A/pICln mimics additional Sm proteins and which is unable to assemble into the core snRNP. Interacts (via C-terminus) with SMN1 (via Tudor domain); the interaction is direct. In terms of processing, methylated on arginine residues by PRMT5 and PRMT7; probable asymmetric dimethylation which is required for assembly and biogenesis of snRNPs.

The protein resides in the cytoplasm. Its subcellular location is the cytosol. It localises to the nucleus. In terms of biological role, plays a role in pre-mRNA splicing as a core component of the spliceosomal U1, U2, U4 and U5 small nuclear ribonucleoproteins (snRNPs), the building blocks of the spliceosome. Component of both the pre-catalytic spliceosome B complex and activated spliceosome C complexes. As a component of the minor spliceosome, involved in the splicing of U12-type introns in pre-mRNAs. As part of the U7 snRNP it is involved in histone pre-mRNA 3'-end processing. The chain is Small nuclear ribonucleoprotein Sm D3 (SNRPD3) from Homo sapiens (Human).